Reading from the N-terminus, the 719-residue chain is Polyribonucleotide nucleotidyltransferase (719 aa).

Aspartate 507 and aspartate 513 together coordinate Mg(2+). The 61-residue stretch at 573–633 folds into the KH domain; it reads PKLELFSVDP…EQIKAAKDYI (61 aa). The 62-residue stretch at 658–719 folds into the S1 motif domain; that stretch reads GQEFQGIVKK…NGKISVDLCE (62 aa).

Belongs to the polyribonucleotide nucleotidyltransferase family. Mg(2+) serves as cofactor.

The protein resides in the cytoplasm. It catalyses the reaction RNA(n+1) + phosphate = RNA(n) + a ribonucleoside 5'-diphosphate. Involved in mRNA degradation. Catalyzes the phosphorolysis of single-stranded polyribonucleotides processively in the 3'- to 5'-direction. This is Polyribonucleotide nucleotidyltransferase from Campylobacter jejuni subsp. jejuni serotype O:23/36 (strain 81-176).